The primary structure comprises 1137 residues: Calcium-activated potassium channel subunit alpha-1 (1137 aa).

The Extracellular portion of the chain corresponds to 1 to 44 (MSNNINANNLNTDSSSSPVNVPKMDALIIPVTMEVPCDSRGQRM). The chain crosses the membrane as a helical span at residues 45–65 (WWAFLASSMVTFFGGLFIILL). Over 66–137 (WRTLKYLWTV…MISAQTLTGR (72 aa)) the chain is Cytoplasmic. Residues 138-158 (VLVVLVFALSIGALVIYFIDS) traverse the membrane as a helical segment. The Extracellular portion of the chain corresponds to 159–173 (SNPIESCQNFYKDFT). Residues 174 to 194 (LQIDMAFNVFFLLYFGLRFIA) traverse the membrane as a helical segment. The Cytoplasmic portion of the chain corresponds to 195–198 (ANDK). Residues 199–219 (LWFWLEVNSVVDFFTVPPVFV) traverse the membrane as a helical segment. Topologically, residues 220 to 223 (SVYL) are extracellular. A helical; Voltage-sensor membrane pass occupies residues 224–244 (NRSWLGLRFLRALRLIQFSEI). At 245-259 (LQFLNILKTSNSIKL) the chain is on the cytoplasmic side. Residues 260–280 (VNLCSIFISTWLTAAGFIHLV) traverse the membrane as a helical segment. The Extracellular segment spans residues 281-294 (ENSGDPWENFQNNQ). Residues 295-317 (QLTYWECVYLLMVTMSTVGYGDV) constitute an intramembrane region (pore-forming). A Selectivity for potassium motif is present at residues 311-314 (TVGY). At 318–326 (YAKTTLGRL) the chain is on the extracellular side. A helical transmembrane segment spans residues 327–347 (FMVFFILGGLAMFASYVPEII). Topologically, residues 348–1137 (ELIGNRKKYG…KQKYVQEDRL (790 aa)) are cytoplasmic. The RCK N-terminal 1 domain maps to 366–508 (RKHIVVCGHI…WNWKEGDDAI (143 aa)). Positions 398, 421, and 423 each coordinate Mg(2+). The segment S7 stretch occupies residues 515-535 (LGFIAQSCLAPGLSTMLANLF). The interval 572-592 (LSFPAVCELVFAKLKLLMIAI) is segment S8. The tract at residues 636 to 640 (CKACH) is heme-binding motif. Residues 660 to 688 (EQPSTLSPKKKQRNGGMRNSPNSSPKLMR) are disordered. The tract at residues 738-758 (VLSGHVVVCIFGDVKSALIGL) is segment S9. The 145-residue stretch at 740–884 (SGHVVVCIFG…MDRSSPDNSP (145 aa)) folds into the RCK N-terminal 2 domain. A Calcium bowl motif is present at residues 904–926 (TELVNDSNVQFLDQDDDDDPDTE). Q913, D916, D919, and D921 together coordinate Ca(2+). A segment S10 region spans residues 933–953 (FACGTAFAVSVLDSLMSATYF). Residues 1088–1112 (ASLSHSSHSSYSSSKKSSSVHSIPS) show a composition bias toward low complexity. Residues 1088–1137 (ASLSHSSHSSYSSSKKSSSVHSIPSTANRPNRTKTRDSREKQKYVQEDRL) are disordered. The span at 1121 to 1137 (KTRDSREKQKYVQEDRL) shows a compositional bias: basic and acidic residues.

This sequence belongs to the potassium channel family. Calcium-activated (TC 1.A.1.3) subfamily. KCa1.1/KCNMA1 sub-subfamily. As to quaternary structure, homotetramer; which constitutes the calcium-activated potassium channel.

It localises to the cell membrane. It catalyses the reaction K(+)(in) = K(+)(out). Ethanol and carbon monoxide-bound heme increase channel activation. Heme inhibits channel activation. Functionally, potassium channel activated by both membrane depolarization or increase in cytosolic Ca(2+) that mediates export of K(+). It is also activated by the concentration of cytosolic Mg(2+). Its activation dampens the excitatory events that elevate the cytosolic Ca(2+) concentration and/or depolarize the cell membrane. It therefore contributes to repolarization of the membrane potential. Plays a key role in controlling excitability in a number of systems, such as regulation of the contraction of smooth muscle, the tuning of hair cells in the cochlea, regulation of transmitter release, and innate immunity. In smooth muscles, its activation by high level of Ca(2+), caused by ryanodine receptors in the sarcoplasmic reticulum, regulates the membrane potential. In cochlea cells, its number and kinetic properties partly determine the characteristic frequency of each hair cell and thereby helps to establish a tonotopic map. Highly sensitive to both iberiotoxin (IbTx) and charybdotoxin (CTX). The chain is Calcium-activated potassium channel subunit alpha-1 (KCNMA1) from Gallus gallus (Chicken).